The chain runs to 688 residues: NADH-ubiquinone oxidoreductase 75 kDa subunit (688 aa).

The 2Fe-2S ferredoxin-type domain maps to 1–85 (MIIRFKINEI…DESIETEIDE (85 aa)). [2Fe-2S] cluster is bound by residues Cys38, Cys49, Cys52, and Cys66. Residues 85-124 (EILKAREGVMEFLLINHPLDCPICDQGGECDLQEQTLAYG) enclose the 4Fe-4S His(Cys)3-ligated-type domain. Positions 101, 105, 108, 114, 153, 156, 159, and 204 each coordinate [4Fe-4S] cluster. The 4Fe-4S Mo/W bis-MGD-type domain occupies 223-279 (LKNIKGIDIFDTLLTPINYQVKGGEIFRILPRINDRINEEWITDKVRFHYESYKIIE).

Belongs to the complex I 75 kDa subunit family. Complex I is composed of about 45 different subunits. It depends on [2Fe-2S] cluster as a cofactor. Requires [4Fe-4S] cluster as cofactor.

The protein resides in the mitochondrion inner membrane. The catalysed reaction is a ubiquinone + NADH + 5 H(+)(in) = a ubiquinol + NAD(+) + 4 H(+)(out). Its function is as follows. Core subunit of the mitochondrial membrane respiratory chain NADH dehydrogenase (Complex I) that is believed to belong to the minimal assembly required for catalysis. Complex I functions in the transfer of electrons from NADH to the respiratory chain. The immediate electron acceptor for the enzyme is believed to be ubiquinone. This is the largest subunit of complex I and it is a component of the iron-sulfur (IP) fragment of the enzyme. It may form part of the active site crevice where NADH is oxidized. This Dictyostelium discoideum (Social amoeba) protein is NADH-ubiquinone oxidoreductase 75 kDa subunit (nad11).